The following is a 149-amino-acid chain: Large ribosomal subunit protein bL9 (149 aa).

The protein belongs to the bacterial ribosomal protein bL9 family.

Its function is as follows. Binds to the 23S rRNA. This chain is Large ribosomal subunit protein bL9, found in Helicobacter pylori (strain J99 / ATCC 700824) (Campylobacter pylori J99).